The primary structure comprises 738 residues: Sporulation kinase E (738 aa).

PAS domains are found at residues Glu-29–Gly-99, Asn-150–Gly-220, Ser-271–Ile-342, and Ser-391–Met-462. The Histidine kinase domain maps to Gly-523–Gln-729. His-526 is subject to Phosphohistidine; by autocatalysis.

It catalyses the reaction ATP + protein L-histidine = ADP + protein N-phospho-L-histidine.. Phosphorylates the sporulation-regulatory protein spo0A under biofilm growth conditions. Also able to weakly phosphorylate spo0F. The chain is Sporulation kinase E (kinE) from Bacillus subtilis (strain 168).